A 441-amino-acid polypeptide reads, in one-letter code: Mannose-6-phosphate isomerase 2 (441 aa).

Zn(2+) is bound by residues Gln-131, His-133, Glu-158, and His-296. Arg-315 is an active-site residue.

The protein belongs to the mannose-6-phosphate isomerase type 1 family. The cofactor is Zn(2+). As to expression, not expressed in any organs under light (at protein level).

The enzyme catalyses D-mannose 6-phosphate = D-fructose 6-phosphate. The protein operates within nucleotide-sugar biosynthesis; GDP-alpha-D-mannose biosynthesis; alpha-D-mannose 1-phosphate from D-fructose 6-phosphate: step 1/2. Its activity is regulated as follows. Inhibited by EDTA, Zn(2+), Cd(2+), DTT, p-chloromercuribenzoate and L-ascorbic acid (AsA). Functionally, involved in the synthesis of the GDP-mannose and dolichol-phosphate-mannose required for a number of critical mannosyl transfer reactions. The polypeptide is Mannose-6-phosphate isomerase 2 (PMI2) (Arabidopsis thaliana (Mouse-ear cress)).